The sequence spans 327 residues: Ferredoxin--NADP reductase (327 aa).

Threonine 18, aspartate 37, glutamine 45, tyrosine 50, alanine 90, phenylalanine 124, aspartate 283, and serine 324 together coordinate FAD.

It belongs to the ferredoxin--NADP reductase type 2 family. In terms of assembly, homodimer. It depends on FAD as a cofactor.

It carries out the reaction 2 reduced [2Fe-2S]-[ferredoxin] + NADP(+) + H(+) = 2 oxidized [2Fe-2S]-[ferredoxin] + NADPH. This is Ferredoxin--NADP reductase from Saccharopolyspora erythraea (strain ATCC 11635 / DSM 40517 / JCM 4748 / NBRC 13426 / NCIMB 8594 / NRRL 2338).